The sequence spans 171 residues: uncharacterized protein (171 aa).

2 consecutive transmembrane segments (helical) span residues 13–35 (VGASLKVPAIAAGAAFFLSIATA) and 50–72 (ATVLALGAGVTAYALRALLAYVV).

The protein localises to the cell membrane. This is an uncharacterized protein from Treponema pallidum (strain Nichols).